The chain runs to 656 residues: tRNA 5-methylaminomethyl-2-thiouridine biosynthesis bifunctional protein MnmC (656 aa).

Residues 1 to 236 (MTDPLIPAVL…KRAMLVGRFA (236 aa)) form a tRNA (mnm(5)s(2)U34)-methyltransferase region. The tract at residues 260-656 (IGTGLAGCAV…LRALRQGTVS (397 aa)) is FAD-dependent cmnm(5)s(2)U34 oxidoreductase.

It in the N-terminal section; belongs to the methyltransferase superfamily. tRNA (mnm(5)s(2)U34)-methyltransferase family. The protein in the C-terminal section; belongs to the DAO family. Requires FAD as cofactor.

The protein localises to the cytoplasm. The enzyme catalyses 5-aminomethyl-2-thiouridine(34) in tRNA + S-adenosyl-L-methionine = 5-methylaminomethyl-2-thiouridine(34) in tRNA + S-adenosyl-L-homocysteine + H(+). Functionally, catalyzes the last two steps in the biosynthesis of 5-methylaminomethyl-2-thiouridine (mnm(5)s(2)U) at the wobble position (U34) in tRNA. Catalyzes the FAD-dependent demodification of cmnm(5)s(2)U34 to nm(5)s(2)U34, followed by the transfer of a methyl group from S-adenosyl-L-methionine to nm(5)s(2)U34, to form mnm(5)s(2)U34. In Paraburkholderia xenovorans (strain LB400), this protein is tRNA 5-methylaminomethyl-2-thiouridine biosynthesis bifunctional protein MnmC.